Reading from the N-terminus, the 162-residue chain is MSGLTHFDASGHAHMVDVGGKQETQRIAIARGTIRMLPATFALIRDGKAKKGDVLGVARIAAIQGAKRTADLIPLCHPLALTRVAVDFELDDALPGVHCVVQVETFGRTGVEMEALTAVQVGLLTVYDMCKAVDRGMVITDVSVREKRGGKSGDWKAEDTAG.

Substrate contacts are provided by residues 75-77 and 113-114; these read LCH and ME. The active site involves D128.

Belongs to the MoaC family. Homohexamer; trimer of dimers.

The enzyme catalyses (8S)-3',8-cyclo-7,8-dihydroguanosine 5'-triphosphate = cyclic pyranopterin phosphate + diphosphate. The protein operates within cofactor biosynthesis; molybdopterin biosynthesis. Catalyzes the conversion of (8S)-3',8-cyclo-7,8-dihydroguanosine 5'-triphosphate to cyclic pyranopterin monophosphate (cPMP). The chain is Cyclic pyranopterin monophosphate synthase from Burkholderia lata (strain ATCC 17760 / DSM 23089 / LMG 22485 / NCIMB 9086 / R18194 / 383).